The primary structure comprises 205 residues: H/ACA ribonucleoprotein complex subunit GAR1 (205 aa).

The span at 1-23 (MSFRGGNRGGRGGFRGGFRGGRT) shows a compositional bias: gly residues. The disordered stretch occupies residues 1-31 (MSFRGGNRGGRGGFRGGFRGGRTGSARSFQQ). Arg-4 is subject to Asymmetric dimethylarginine; by HMT1. The tract at residues 4–21 (RGGNRGGRGGFRGGFRGG) is RGG-box 1. Position 8 is an asymmetric dimethylarginine; by HMT1; alternate (Arg-8). The residue at position 8 (Arg-8) is an Omega-N-methylarginine; by HMT1; alternate. At Arg-11 the chain carries Asymmetric dimethylarginine; by HMT1. The residue at position 15 (Arg-15) is an Asymmetric dimethylarginine; by HMT1; alternate. The residue at position 15 (Arg-15) is an Omega-N-methylarginine; by HMT1; alternate. Arg-19 is modified (asymmetric dimethylarginine; by HMT1). Lys-77 is covalently cross-linked (Glycyl lysine isopeptide (Lys-Gly) (interchain with G-Cter in ubiquitin)). The interval 124–205 (PKPKVVGPPK…SRGGFRGGRR (82 aa)) is disordered. Positions 143 to 205 (APGGRGGASM…SRGGFRGGRR (63 aa)) are enriched in gly residues. Arg-147, Arg-154, and Arg-158 each carry asymmetric dimethylarginine; by HMT1; alternate. Omega-N-methylarginine; by HMT1; alternate occurs at positions 147, 154, and 158. Positions 147–205 (RGGASMGRGGSRGGFRGGRGGSSFRGGRGGSSFRGGSRGGSFRGGSRGGSRGGFRGGRR) are RGG-box 2. Arg-162 carries the post-translational modification Asymmetric dimethylarginine; by HMT1. Residue Arg-165 is modified to Asymmetric dimethylarginine; by HMT1; alternate. Arg-165 is modified (omega-N-methylarginine; by HMT1; alternate). 2 positions are modified to asymmetric dimethylarginine; by HMT1: Arg-171 and Arg-174. Omega-N-methylarginine; by HMT1 occurs at positions 180 and 184. Arg-189 is modified (asymmetric dimethylarginine; by HMT1; alternate). The residue at position 189 (Arg-189) is an Omega-N-methylarginine; by HMT1; alternate. Asymmetric dimethylarginine; by HMT1 occurs at positions 193, 197, and 201.

This sequence belongs to the GAR1 family. In terms of assembly, component of the small nucleolar ribonucleoprotein particles containing H/ACA-type snoRNAs (H/ACA snoRNPs). The protein component of the H/ACA snoRNP contains CBF5, GAR1, NHP2 and NOP10. The complex contains a stable core composed of CBF5 and NOP10, to which GAR1 and NHP2 subsequently bind. Interacts with snoRNAs. In terms of processing, methylated by HMT1, forming asymmetric dimethylarginines (DMA) within a domain referred to as an RGG box, made up of repeated Gly-Gly dipeptides interspersed with Arg and aromatic residues.

It is found in the nucleus. It localises to the nucleolus. Functionally, non-catalytic component of the H/ACA small nucleolar ribonucleoprotein (H/ACA snoRNP), which catalyzes pseudouridylation of rRNA and is required for ribosome biogenesis. This involves the isomerization of uridine such that the ribose is subsequently attached to C5, instead of the normal N1. Pseudouridine ('psi') residues may serve to stabilize the conformation of rRNAs. The H/ACA snoRNP complex also mediates pseudouridylation of other types of RNAs. The H/ACA snoRNP complex mediates pseudouridylation at position 93 in U2 snRNA. Essential for growth. The protein is H/ACA ribonucleoprotein complex subunit GAR1 of Saccharomyces cerevisiae (strain ATCC 204508 / S288c) (Baker's yeast).